The chain runs to 264 residues: Triosephosphate isomerase (264 aa).

Substrate is bound at residue 13–15 (NWK). The active-site Electrophile is His98. Glu170 functions as the Proton acceptor in the catalytic mechanism. Substrate-binding positions include Gly176, Ser216, and 237–238 (GG).

Belongs to the triosephosphate isomerase family. Homodimer.

The protein resides in the cytoplasm. The enzyme catalyses D-glyceraldehyde 3-phosphate = dihydroxyacetone phosphate. The protein operates within carbohydrate biosynthesis; gluconeogenesis. It functions in the pathway carbohydrate degradation; glycolysis; D-glyceraldehyde 3-phosphate from glycerone phosphate: step 1/1. Functionally, involved in the gluconeogenesis. Catalyzes stereospecifically the conversion of dihydroxyacetone phosphate (DHAP) to D-glyceraldehyde-3-phosphate (G3P). The protein is Triosephosphate isomerase of Protochlamydia amoebophila (strain UWE25).